The following is a 216-amino-acid chain: Protein-methionine-sulfoxide reductase heme-binding subunit MsrQ (216 aa).

5 helical membrane passes run 16-36 (IWAL…LGAT), 48-68 (EHLL…ITPI), 82-102 (ALGL…MVLD), 119-139 (FITI…TSNI), and 155-175 (LVYV…KVVG).

Belongs to the MsrQ family. In terms of assembly, heterodimer of a catalytic subunit (MsrP) and a heme-binding subunit (MsrQ). Requires FMN as cofactor. It depends on heme b as a cofactor.

It is found in the cell inner membrane. Part of the MsrPQ system that repairs oxidized periplasmic proteins containing methionine sulfoxide residues (Met-O), using respiratory chain electrons. Thus protects these proteins from oxidative-stress damage caused by reactive species of oxygen and chlorine generated by the host defense mechanisms. MsrPQ is essential for the maintenance of envelope integrity under bleach stress, rescuing a wide series of structurally unrelated periplasmic proteins from methionine oxidation. MsrQ provides electrons for reduction to the reductase catalytic subunit MsrP, using the quinone pool of the respiratory chain. The protein is Protein-methionine-sulfoxide reductase heme-binding subunit MsrQ of Rhizobium meliloti (strain 1021) (Ensifer meliloti).